A 91-amino-acid polypeptide reads, in one-letter code: DNA-directed RNA polymerase subunit omega (91 aa).

This sequence belongs to the RNA polymerase subunit omega family. As to quaternary structure, the RNAP catalytic core consists of 2 alpha, 1 beta, 1 beta' and 1 omega subunit. When a sigma factor is associated with the core the holoenzyme is formed, which can initiate transcription.

It carries out the reaction RNA(n) + a ribonucleoside 5'-triphosphate = RNA(n+1) + diphosphate. Promotes RNA polymerase assembly. Latches the N- and C-terminal regions of the beta' subunit thereby facilitating its interaction with the beta and alpha subunits. The sequence is that of DNA-directed RNA polymerase subunit omega from Sodalis glossinidius (strain morsitans).